Here is a 589-residue protein sequence, read N- to C-terminus: C-type lectin domain family 4 member F (589 aa).

Residues 1-39 lie on the Cytoplasmic side of the membrane; the sequence is MDGEAVRFCTDNQCVSLHPQEVDSVAMAPAAPKIPRLVQ. The chain crosses the membrane as a helical; Signal-anchor for type II membrane protein span at residues 40–60; that stretch reads ATPAFMAVTLVFSLVTLFVVV. At 61 to 589 the chain is on the extracellular side; it reads QQQTRPVPKP…TPPCPWILSN (529 aa). N-linked (GlcNAc...) asparagine glycosylation is found at Asn79, Asn113, Asn207, Asn230, Asn244, Asn312, Asn385, and Asn399. The region spanning 476–589 is the C-type lectin domain; that stretch reads NGGSLYYFSS…TPPCPWILSN (114 aa).

The protein resides in the membrane. Its function is as follows. Receptor with an affinity for galactose and fucose. Could be involved in endocytosis. This chain is C-type lectin domain family 4 member F (CLEC4F), found in Homo sapiens (Human).